A 529-amino-acid polypeptide reads, in one-letter code: CRISPR-associated endodeoxyribonuclease Cas12f1 (529 aa).

The tract at residues 1–95 is zinc finger domain (ZF); sequence MAKNTITKTL…RGQFPDAVFW (95 aa). Residues cysteine 50, histidine 53, cysteine 69, and cysteine 72 each coordinate Zn(2+). A recognition domain (REC) region spans residues 96–192; it reads QEISEIFRQL…PTTKSDNFPI (97 aa). The tract at residues 193-312 is wedge domain (WED); sequence PLVKQKGGQY…MLNLSIDVPK (120 aa). A linker region spans residues 313-321; it reads IDKGVDPSI. The interval 322 to 473 is ruvC-I; that stretch reads IGGIDVGVKS…RKVAPNNTSK (152 aa). Residues aspartate 326 and glutamate 422 contribute to the active site. Residues 474–508 form a target nucleic acid-binding (TNB) region; the sequence is TCSKCGHLNNYFNFEYRKKNKFPHFKCEKCNFKEN. Cysteine 475 and cysteine 478 together coordinate Zn(2+). Arginine 490 is an active-site residue. Zn(2+) is bound by residues cysteine 500 and cysteine 503. Positions 509–529 are ruvC-II; it reads ADYNAALNISNPKLKSTKEEP. Aspartate 510 is a catalytic residue.

This sequence belongs to the CRISPR-associated endonuclease Cas12f family. An asymmetric homodimer. Guide RNA is probably required for dimerization. It depends on Mg(2+) as a cofactor. The cofactor is Zn(2+).

Its activity is regulated as follows. Target ssDNA cleavage is inhibited by EDTA. Activity is maximal with 5-50 mM NaCl, is less efficient at higher NaCl concentrations. CRISPR (clustered regularly interspaced short palindromic repeat), is an adaptive immune system that provides protection against mobile genetic elements (viruses, transposable elements and conjugative plasmids). CRISPR clusters contain sequences complementary to antecedent mobile elements and target invading nucleic acids. CRISPR clusters are transcribed and processed into CRISPR RNA (crRNA), which requires a trans-encoded small RNA (tracrRNA), but not this protein (in vitro). Upon expression in E.coli of this protein, a mini CRISPR array and the probable tracrRNA, the protein associates with both RNAs. The mini system is not active in E.coli against phiX174 phage, nor is it active in protection against transformation by foreign plasmids. In vitro the purified protein-tracrRNA-crRNA complex cleaves ssDNA complementary to the crRNA; target cleavage requires both tracrRNA and crRNA, but not a protospacer adjacent motif (PAM). The tracrRNA-crRNA can be replaced by a single guide RNA (sgRNA). 2-nucleotide mismatches in the middle of the crRNA:DNA heteroduplex decrease cleavage. Cleavage occurs just downstream of the heteroduplex. Activation of this protein results in non-specific ssDNA degradation in vitro. In vitro and in E.coli (coexpressed with sgRNA) has dsDNA endonuclease activity, recognizing the 5' PAM sequence TTTR; both sgRNA and a PAM are required for activity. Cleaves the target strand 24 and the nontarget strand 22 bases upstream of the PAM (respectively), resulting in 5' overhangs. The 2 monomers interact differently with the sgRNA and target DNA. Mutagenesis of a dimeric construct shows that one of the RuvC monomers probably cleaves both DNA strands. This is CRISPR-associated endodeoxyribonuclease Cas12f1 from Uncultured archaeon.